A 565-amino-acid polypeptide reads, in one-letter code: Salicyl-AMP ligase / salicyl-S-ArCP synthetase (565 aa).

Residues G214, G330, V352, D436, R451, and K542 each contribute to the ATP site.

It belongs to the ATP-dependent AMP-binding enzyme family.

The enzyme catalyses salicylate + ATP + H(+) = 2-hydroxybenzoyl-5'-AMP + diphosphate. It carries out the reaction 2-hydroxybenzoyl-5'-AMP + holo-[ACP] = salicyl-[ACP] + AMP + H(+). It participates in siderophore biosynthesis; mycobactin biosynthesis. With respect to regulation, inhibited by salicyl-AMS, an acyl-AMP analog. Also inhibited by 5'-O-[(N-acyl)sulfamoyl]adenosines. Its function is as follows. Involved in the initial steps of the mycobactin biosynthetic pathway. Catalyzes the salicylation of the aryl carrier protein (ArCP) domain of MbtB through a two-step reaction. The first step is the ATP-dependent adenylation of salicylate to generate a salicyl-AMP intermediate. The second step is the transfer of this activated salicylate to MbtB to form a salicyl-ArCP domain thioester. The sequence is that of Salicyl-AMP ligase / salicyl-S-ArCP synthetase from Mycobacterium tuberculosis (strain ATCC 25618 / H37Rv).